Reading from the N-terminus, the 107-residue chain is Small ribosomal subunit protein uS17 (107 aa).

This sequence belongs to the universal ribosomal protein uS17 family. As to quaternary structure, part of the 30S ribosomal subunit.

In terms of biological role, one of the primary rRNA binding proteins, it binds specifically to the 5'-end of 16S ribosomal RNA. This is Small ribosomal subunit protein uS17 from Nitrosopumilus maritimus (strain SCM1).